The chain runs to 201 residues: Potassium-transporting ATPase KdpC subunit (201 aa).

The helical transmembrane segment at 12-34 (LLALTMITGLAYPLAVTGLATVL) threads the bilayer. The segment at 69-102 (RPSATVAPDPADSSKTVSAPYNAANSGGSNLGPT) is disordered. Positions 81-101 (SSKTVSAPYNAANSGGSNLGP) are enriched in polar residues.

The protein belongs to the KdpC family. As to quaternary structure, the system is composed of three essential subunits: KdpA, KdpB and KdpC.

It localises to the cell inner membrane. Functionally, part of the high-affinity ATP-driven potassium transport (or Kdp) system, which catalyzes the hydrolysis of ATP coupled with the electrogenic transport of potassium into the cytoplasm. This subunit acts as a catalytic chaperone that increases the ATP-binding affinity of the ATP-hydrolyzing subunit KdpB by the formation of a transient KdpB/KdpC/ATP ternary complex. This chain is Potassium-transporting ATPase KdpC subunit, found in Rhodopseudomonas palustris (strain TIE-1).